We begin with the raw amino-acid sequence, 472 residues long: uncharacterized protein (472 aa).

14 helical membrane passes run 14-34 (VIVG…TLLI), 53-73 (WLTT…AFLI), 80-100 (ALLI…AFAP), 113-133 (AAGA…IFPI), 142-162 (MVGL…GWAV), 169-189 (SLFY…SILM), 202-222 (ILSV…FSSV), 227-247 (WSSS…LLFI), 263-283 (FTFG…ALLI), 302-322 (FDTG…SPII), 333-353 (GLAI…MQLT), 359-379 (AWIV…MMPV), 405-427 (VGGS…HAGT), and 437-457 (GMNA…LLSF).

Belongs to the major facilitator superfamily. EmrB family.

The protein resides in the cell membrane. This is an uncharacterized protein from Bacillus subtilis (strain 168).